We begin with the raw amino-acid sequence, 126 residues long: Fluoride-specific ion channel FluC (126 aa).

4 consecutive transmembrane segments (helical) span residues 4-24 (PLLS…LLGL), 33-53 (IPLG…FAMA), 67-87 (FVIT…IEIV), and 97-117 (MAML…CLGL). Gly74 and Thr77 together coordinate Na(+).

The protein belongs to the fluoride channel Fluc/FEX (TC 1.A.43) family.

It localises to the cell inner membrane. The enzyme catalyses fluoride(in) = fluoride(out). Na(+) is not transported, but it plays an essential structural role and its presence is essential for fluoride channel function. In terms of biological role, fluoride-specific ion channel. Important for reducing fluoride concentration in the cell, thus reducing its toxicity. The sequence is that of Fluoride-specific ion channel FluC from Acinetobacter baumannii (strain ACICU).